The primary structure comprises 350 residues: Methionine import ATP-binding protein MetN (350 aa).

Positions 9 to 245 (LKDVDVEFHG…PQQQLTKDFI (237 aa)) constitute an ABC transporter domain. 43–50 (GYSGAGKS) is an ATP binding site.

Belongs to the ABC transporter superfamily. Methionine importer (TC 3.A.1.24) family. In terms of assembly, the complex is composed of two ATP-binding proteins (MetN), two transmembrane proteins (MetI) and a solute-binding protein (MetQ).

The protein resides in the cell membrane. It carries out the reaction L-methionine(out) + ATP + H2O = L-methionine(in) + ADP + phosphate + H(+). It catalyses the reaction D-methionine(out) + ATP + H2O = D-methionine(in) + ADP + phosphate + H(+). Its function is as follows. Part of the ABC transporter complex MetNIQ involved in methionine import. Responsible for energy coupling to the transport system. The chain is Methionine import ATP-binding protein MetN from Lacticaseibacillus paracasei (strain ATCC 334 / BCRC 17002 / CCUG 31169 / CIP 107868 / KCTC 3260 / NRRL B-441) (Lactobacillus paracasei).